We begin with the raw amino-acid sequence, 372 residues long: MFDFQINAHCSHTRARVGCFRTPHGSVNTPRFMPVGTLATVKGITATQLADTGAQMVLANTYHLHLQPGEGIVADAGGLHRFMGWDRPLLTDSGGFQIFSLADLNRIDDHGVVFRNPRNGSQIELTPERAIEIQMALGADVAMAFDQCPPYPASESDVEAACKRTHAWLERCSNTHQLTNQALFGIVQGGCFPHLREQSAQIVASFDLPGIAIGGVSVGEPVEDIHRIVRQVSPLLPQDRPRYLMGIGTLREIAIAVASGIDLFDCVLPTRLGRHGTALVAGERWNLRNARFREDHTPLDQSCTCTACRHHSRAYLHHLIRNEELLGLTLLSLHNLTQLIRFTSAISQAIQDDCFSEDFAPWQPDSAAHHTW.

Residue Asp92 is the Proton acceptor of the active site. Residues 92–96, Asp146, Gln188, and Gly215 each bind substrate; that span reads DSGGF. Residues 246 to 252 form an RNA binding region; it reads GIGTLRE. The Nucleophile role is filled by Asp265. The tract at residues 270–274 is RNA binding; important for wobble base 34 recognition; sequence TRLGR. The Zn(2+) site is built by Cys303, Cys305, Cys308, and His334.

The protein belongs to the queuine tRNA-ribosyltransferase family. Homodimer. Within each dimer, one monomer is responsible for RNA recognition and catalysis, while the other monomer binds to the replacement base PreQ1. Zn(2+) serves as cofactor.

It catalyses the reaction 7-aminomethyl-7-carbaguanine + guanosine(34) in tRNA = 7-aminomethyl-7-carbaguanosine(34) in tRNA + guanine. It participates in tRNA modification; tRNA-queuosine biosynthesis. Catalyzes the base-exchange of a guanine (G) residue with the queuine precursor 7-aminomethyl-7-deazaguanine (PreQ1) at position 34 (anticodon wobble position) in tRNAs with GU(N) anticodons (tRNA-Asp, -Asn, -His and -Tyr). Catalysis occurs through a double-displacement mechanism. The nucleophile active site attacks the C1' of nucleotide 34 to detach the guanine base from the RNA, forming a covalent enzyme-RNA intermediate. The proton acceptor active site deprotonates the incoming PreQ1, allowing a nucleophilic attack on the C1' of the ribose to form the product. After dissociation, two additional enzymatic reactions on the tRNA convert PreQ1 to queuine (Q), resulting in the hypermodified nucleoside queuosine (7-(((4,5-cis-dihydroxy-2-cyclopenten-1-yl)amino)methyl)-7-deazaguanosine). This is Queuine tRNA-ribosyltransferase from Prochlorococcus marinus (strain MIT 9303).